The chain runs to 330 residues: Ketol-acid reductoisomerase (NADP(+)) (330 aa).

One can recognise a KARI N-terminal Rossmann domain in the interval 1–181; it reads MKVYYEQDAT…GGARSGVIET (181 aa). NADP(+) contacts are provided by residues 24-27, R47, and 82-85; these read YGSQ and DQVQ. The active site involves H107. G133 contributes to the NADP(+) binding site. The KARI C-terminal knotted domain maps to 182–327; sequence TFKEETETDL…GKLRGMMPWL (146 aa). D190, E194, E226, and E230 together coordinate Mg(2+). S251 serves as a coordination point for substrate.

It belongs to the ketol-acid reductoisomerase family. Mg(2+) serves as cofactor.

The catalysed reaction is (2R)-2,3-dihydroxy-3-methylbutanoate + NADP(+) = (2S)-2-acetolactate + NADPH + H(+). The enzyme catalyses (2R,3R)-2,3-dihydroxy-3-methylpentanoate + NADP(+) = (S)-2-ethyl-2-hydroxy-3-oxobutanoate + NADPH + H(+). The protein operates within amino-acid biosynthesis; L-isoleucine biosynthesis; L-isoleucine from 2-oxobutanoate: step 2/4. It functions in the pathway amino-acid biosynthesis; L-valine biosynthesis; L-valine from pyruvate: step 2/4. In terms of biological role, involved in the biosynthesis of branched-chain amino acids (BCAA). Catalyzes an alkyl-migration followed by a ketol-acid reduction of (S)-2-acetolactate (S2AL) to yield (R)-2,3-dihydroxy-isovalerate. In the isomerase reaction, S2AL is rearranged via a Mg-dependent methyl migration to produce 3-hydroxy-3-methyl-2-ketobutyrate (HMKB). In the reductase reaction, this 2-ketoacid undergoes a metal-dependent reduction by NADPH to yield (R)-2,3-dihydroxy-isovalerate. In Nitratidesulfovibrio vulgaris (strain DSM 19637 / Miyazaki F) (Desulfovibrio vulgaris), this protein is Ketol-acid reductoisomerase (NADP(+)).